Reading from the N-terminus, the 296-residue chain is Ribosomal RNA small subunit methyltransferase H (296 aa).

Residues 38 to 40, Glu57, Phe88, Asp103, and His110 contribute to the S-adenosyl-L-methionine site; that span reads GAH.

The protein belongs to the methyltransferase superfamily. RsmH family.

It localises to the cytoplasm. The enzyme catalyses cytidine(1402) in 16S rRNA + S-adenosyl-L-methionine = N(4)-methylcytidine(1402) in 16S rRNA + S-adenosyl-L-homocysteine + H(+). Functionally, specifically methylates the N4 position of cytidine in position 1402 (C1402) of 16S rRNA. This is Ribosomal RNA small subunit methyltransferase H from Borreliella afzelii (strain PKo) (Borrelia afzelii).